We begin with the raw amino-acid sequence, 305 residues long: MKEESKIVTSKFKHTPVLVNQVLEAIAKLPSELLIKGKLIDATIGGGGHSALILKGFPSLHITGLDQDPSAIDAASKQLLHFGSRAEIISSNFADFVPQEEVAFVLADLGVSSPQIDEAKRGFSFRLNGPLDMRMNPKKGLKADELLEKTEEKALADLIYKYGEEKFSRRIARRIKQDLSANGPYEGTSALAYAIAGCYPPKMRNGRIHPATRTFQALRIAINNELDALQHLLQKAPNWLLPGGVFAVISFHSLEDRLVKKSFLTDERLERITRKPIQADSNEKLNNPRSRSAKLRLAKKRNPNE.

Residues 47 to 49 (GGH), Asp66, Phe93, Asp108, and Gln115 contribute to the S-adenosyl-L-methionine site. Residues 279-305 (ADSNEKLNNPRSRSAKLRLAKKRNPNE) form a disordered region. Over residues 291–305 (RSAKLRLAKKRNPNE) the composition is skewed to basic residues.

This sequence belongs to the methyltransferase superfamily. RsmH family.

Its subcellular location is the cytoplasm. The catalysed reaction is cytidine(1402) in 16S rRNA + S-adenosyl-L-methionine = N(4)-methylcytidine(1402) in 16S rRNA + S-adenosyl-L-homocysteine + H(+). Specifically methylates the N4 position of cytidine in position 1402 (C1402) of 16S rRNA. In Prochlorococcus marinus (strain SARG / CCMP1375 / SS120), this protein is Ribosomal RNA small subunit methyltransferase H.